The chain runs to 584 residues: Galectin-3-binding protein (584 aa).

An N-terminal signal peptide occupies residues 1 to 18 (MTPPRLFWVWLLVAGTQG). The 101-residue stretch at 24–124 (MRLADGGATN…HERDAGVVCT (101 aa)) folds into the SRCR domain. 3 disulfides stabilise this stretch: C49/C113, C62/C123, and C93/C103. A glycan (N-linked (GlcNAc...) asparagine) is linked at N69. 2 N-linked (GlcNAc...) asparagine glycosylation sites follow: N125 and N192. Positions 153–221 (CDLSISVNVQ…FYSRRIDITL (69 aa)) constitute a BTB domain. Residues 260 to 359 (PLDLYAYAVA…MLPEELFELQ (100 aa)) enclose the BACK domain. 4 N-linked (GlcNAc...) asparagine glycosylation sites follow: N361, N397, N550, and N579.

Homodimers and homomultimers. The multimers form ring-like structures with a diameter of 30-40 nm. Binds LGALS1 and LGALS3. Binds ITGB1, COL4A1, COL5A1, COL6A1, FN1 and NID. Interacts with the gamma-tubulin ring complex (gamma-TuRC), composed of gamma-tubulin, TUBGCP2, TUBGCP3, TUBGCP4, TUBGCP5 and TUBGCP6. The unglycosylated form interacts with PDE4DIP; this interaction, which is PDE4DIP isoform-specific, may connect a pericentrosomal complex, made of AKAP9, CDK5RAP2, EB1/MAPRE1 and PDE4DIP, to the gamma-tubulin ring complex (gamma-TuRC) to promote microtubule assembly and acetylation.

The protein resides in the secreted. The protein localises to the extracellular space. Its subcellular location is the extracellular matrix. Its function is as follows. Promotes integrin-mediated cell adhesion. May stimulate host defense against viruses and tumor cells. The chain is Galectin-3-binding protein (LGALS3BP) from Pongo abelii (Sumatran orangutan).